We begin with the raw amino-acid sequence, 841 residues long: MRGLNLFQLILALLLSMVAAEDGYDGWLRYAPVSCDLRCRQALPSHVVLLNSTKGSPIETAGRELKAGFQSILSTNLTSRPFQCNSSTSILVATLDEYRQRCRDINVPELDPDGFWLQSEGDTVRILGKDARGALYGAYEYLAMVAQRNFSRVAYATSPHAPIRWVNQWDNMDGSIERGYGGASIFFKDGTVVEDMAPVEQYARLLASIRINAIVVNNVNANATLLLPENMKGLGRIADACRPYGVQIGISLNFASPEDLGGLNTYDPLDPGVIAWWQNITDSLYTYVPDMAGYLVKADSEGQPGPDTYNRTLSQGANLFARALQPYGGVLMYRAFVYDDNLNESDWKADRAKAAVEYFKDLDGQFEENVVIQIKYGPIDFQVREPTSPLFANLYHTNTAIELEVSQEYLGQQCHLVYLPPLWKTVLDFDLRVDHKPSMVRDIISGQRFNRTLGGWAAVVNVGTNRTWLGSHLAMSNLYAYGRLAWSPTDESEQILEDWTRLTFGQNHHVINTISDMSMTSWPAYENYTGNLGIQTLTDILYTHYGPNPATQDNNGWGQWTRADHDSVGMDRTIRNGTGYTGQYPEEVARVYESLESTPDDLVLWFHHVPWTHRLHSGVTVIQHFYNAHYAGAEAAHGFVRQWESLEGLIDRERYEAMRSRLVYQAGHSIVWRDAINNFYYNMTGIPDVAGRVGHHPWRIEAESMRLDGYQTYTVSPFEAASNTTAIITTSNSTTGTARTSIKAPSGVYDIGVNYYDLYGGQSKWTLSVGDKVVGQWLGDMEHNSLGHTPSIYLDGHSATRITFHGVGIRQGDQLKIVGEANGVEPAPLDYIVLLPPGLVD.

A signal peptide spans 1 to 20; it reads MRGLNLFQLILALLLSMVAA. N-linked (GlcNAc...) asparagine glycosylation is found at Asn51, Asn76, Asn85, Asn149, Asn222, Asn279, Asn310, Asn343, Asn450, Asn465, Asn527, Asn576, Asn682, Asn723, and Asn732.

The protein belongs to the glycosyl hydrolase 67 family.

The protein localises to the secreted. It catalyses the reaction an alpha-D-glucuronoside + H2O = D-glucuronate + an alcohol. In terms of biological role, alpha-glucuronidase involved in the hydrolysis of xylan, a major structural heterogeneous polysaccharide found in plant biomass representing the second most abundant polysaccharide in the biosphere, after cellulose. Releases 4-O-methylglucuronic acid from xylan. This chain is Probable alpha-glucuronidase A (aguA), found in Aspergillus niger.